We begin with the raw amino-acid sequence, 281 residues long: Lipoyl synthase (281 aa).

7 residues coordinate [4Fe-4S] cluster: C37, C42, C48, C63, C67, C70, and S274. In terms of domain architecture, Radical SAM core spans 49 to 263; it reads WSRGTATFMI…RQQAVNKGFK (215 aa).

The protein belongs to the radical SAM superfamily. Lipoyl synthase family. [4Fe-4S] cluster serves as cofactor.

The protein localises to the cytoplasm. The enzyme catalyses [[Fe-S] cluster scaffold protein carrying a second [4Fe-4S](2+) cluster] + N(6)-octanoyl-L-lysyl-[protein] + 2 oxidized [2Fe-2S]-[ferredoxin] + 2 S-adenosyl-L-methionine + 4 H(+) = [[Fe-S] cluster scaffold protein] + N(6)-[(R)-dihydrolipoyl]-L-lysyl-[protein] + 4 Fe(3+) + 2 hydrogen sulfide + 2 5'-deoxyadenosine + 2 L-methionine + 2 reduced [2Fe-2S]-[ferredoxin]. Its pathway is protein modification; protein lipoylation via endogenous pathway; protein N(6)-(lipoyl)lysine from octanoyl-[acyl-carrier-protein]: step 2/2. In terms of biological role, catalyzes the radical-mediated insertion of two sulfur atoms into the C-6 and C-8 positions of the octanoyl moiety bound to the lipoyl domains of lipoate-dependent enzymes, thereby converting the octanoylated domains into lipoylated derivatives. In Parabacteroides distasonis (strain ATCC 8503 / DSM 20701 / CIP 104284 / JCM 5825 / NCTC 11152), this protein is Lipoyl synthase.